A 347-amino-acid polypeptide reads, in one-letter code: Protein RecA (347 aa).

Residue 64 to 71 (GPESSGKT) participates in ATP binding.

Belongs to the RecA family.

Its subcellular location is the cytoplasm. Can catalyze the hydrolysis of ATP in the presence of single-stranded DNA, the ATP-dependent uptake of single-stranded DNA by duplex DNA, and the ATP-dependent hybridization of homologous single-stranded DNAs. It interacts with LexA causing its activation and leading to its autocatalytic cleavage. This chain is Protein RecA, found in Bartonella bacilliformis (strain ATCC 35685 / KC583 / Herrer 020/F12,63).